We begin with the raw amino-acid sequence, 319 residues long: NADH-quinone oxidoreductase subunit H 2 (319 aa).

The next 9 helical transmembrane spans lie at 1–21 (MIGMIITATISVALIMVLLVL), 77–97 (ILAPAVAATPVLAGFGVVAIG), 107–127 (VGLLFLLGMLGLTAYAAVLGA), 147–167 (LAYEVFLGLSLMGVVMIAGSF), 179–199 (VWFVVLQPLGMALFTIAGIAA), 214–234 (LIAGFITEYTGMSFGLFFLGE), 238–258 (VLLVSALAVTLFFGGWLGPWL), 262–282 (VWFGLKTAVIAVAFVWIRATL), and 293–313 (FAWKVALPLSLLNLMLTGIVV).

Belongs to the complex I subunit 1 family. As to quaternary structure, NDH-1 is composed of 14 different subunits. Subunits NuoA, H, J, K, L, M, N constitute the membrane sector of the complex.

Its subcellular location is the cell inner membrane. The catalysed reaction is a quinone + NADH + 5 H(+)(in) = a quinol + NAD(+) + 4 H(+)(out). Its function is as follows. NDH-1 shuttles electrons from NADH, via FMN and iron-sulfur (Fe-S) centers, to quinones in the respiratory chain. The immediate electron acceptor for the enzyme in this species is believed to be ubiquinone. Couples the redox reaction to proton translocation (for every two electrons transferred, four hydrogen ions are translocated across the cytoplasmic membrane), and thus conserves the redox energy in a proton gradient. This subunit may bind ubiquinone. The protein is NADH-quinone oxidoreductase subunit H 2 of Rhodopseudomonas palustris (strain ATCC BAA-98 / CGA009).